Reading from the N-terminus, the 170-residue chain is Crossover junction endodeoxyribonuclease RuvC (170 aa).

Residues Asp-9, Glu-70, and Asp-145 contribute to the active site. Mg(2+) is bound by residues Asp-9, Glu-70, and Asp-145.

The protein belongs to the RuvC family. In terms of assembly, homodimer which binds Holliday junction (HJ) DNA. The HJ becomes 2-fold symmetrical on binding to RuvC with unstacked arms; it has a different conformation from HJ DNA in complex with RuvA. In the full resolvosome a probable DNA-RuvA(4)-RuvB(12)-RuvC(2) complex forms which resolves the HJ. Mg(2+) is required as a cofactor.

It localises to the cytoplasm. The catalysed reaction is Endonucleolytic cleavage at a junction such as a reciprocal single-stranded crossover between two homologous DNA duplexes (Holliday junction).. Functionally, the RuvA-RuvB-RuvC complex processes Holliday junction (HJ) DNA during genetic recombination and DNA repair. Endonuclease that resolves HJ intermediates. Cleaves cruciform DNA by making single-stranded nicks across the HJ at symmetrical positions within the homologous arms, yielding a 5'-phosphate and a 3'-hydroxyl group; requires a central core of homology in the junction. The consensus cleavage sequence is 5'-(A/T)TT(C/G)-3'. Cleavage occurs on the 3'-side of the TT dinucleotide at the point of strand exchange. HJ branch migration catalyzed by RuvA-RuvB allows RuvC to scan DNA until it finds its consensus sequence, where it cleaves and resolves the cruciform DNA. This Chlamydia trachomatis serovar A (strain ATCC VR-571B / DSM 19440 / HAR-13) protein is Crossover junction endodeoxyribonuclease RuvC.